The sequence spans 643 residues: Phosphomethylpyrimidine synthase (643 aa).

Substrate is bound by residues Asn248, Met277, Tyr306, His342, 362-364 (SRG), 403-406 (DGLR), and Glu442. His446 contributes to the Zn(2+) binding site. Tyr469 provides a ligand contact to substrate. Position 510 (His510) interacts with Zn(2+). Cys590, Cys593, and Cys598 together coordinate [4Fe-4S] cluster.

The protein belongs to the ThiC family. As to quaternary structure, homodimer. [4Fe-4S] cluster is required as a cofactor.

It carries out the reaction 5-amino-1-(5-phospho-beta-D-ribosyl)imidazole + S-adenosyl-L-methionine = 4-amino-2-methyl-5-(phosphooxymethyl)pyrimidine + CO + 5'-deoxyadenosine + formate + L-methionine + 3 H(+). Its pathway is cofactor biosynthesis; thiamine diphosphate biosynthesis. In terms of biological role, catalyzes the synthesis of the hydroxymethylpyrimidine phosphate (HMP-P) moiety of thiamine from aminoimidazole ribotide (AIR) in a radical S-adenosyl-L-methionine (SAM)-dependent reaction. The polypeptide is Phosphomethylpyrimidine synthase (Burkholderia ambifaria (strain MC40-6)).